The chain runs to 193 residues: NADH-quinone oxidoreductase subunit B (193 aa).

Positions 72, 73, 137, and 167 each coordinate [4Fe-4S] cluster.

The protein belongs to the complex I 20 kDa subunit family. NDH-1 is composed of 14 different subunits. Subunits NuoB, C, D, E, F, and G constitute the peripheral sector of the complex. The cofactor is [4Fe-4S] cluster.

The protein localises to the cell inner membrane. It carries out the reaction a quinone + NADH + 5 H(+)(in) = a quinol + NAD(+) + 4 H(+)(out). In terms of biological role, NDH-1 shuttles electrons from NADH, via FMN and iron-sulfur (Fe-S) centers, to quinones in the respiratory chain. The immediate electron acceptor for the enzyme in this species is believed to be ubiquinone. Couples the redox reaction to proton translocation (for every two electrons transferred, four hydrogen ions are translocated across the cytoplasmic membrane), and thus conserves the redox energy in a proton gradient. The chain is NADH-quinone oxidoreductase subunit B from Bradyrhizobium sp. (strain ORS 278).